A 303-amino-acid chain; its full sequence is tRNA dimethylallyltransferase (303 aa).

An ATP-binding site is contributed by 13-20 (GPTASGKS). Residue 15 to 20 (TASGKS) coordinates substrate. 2 interaction with substrate tRNA regions span residues 38 to 41 (DSMQ) and 162 to 166 (QRLLR).

This sequence belongs to the IPP transferase family. As to quaternary structure, monomer. Requires Mg(2+) as cofactor.

It carries out the reaction adenosine(37) in tRNA + dimethylallyl diphosphate = N(6)-dimethylallyladenosine(37) in tRNA + diphosphate. Its function is as follows. Catalyzes the transfer of a dimethylallyl group onto the adenine at position 37 in tRNAs that read codons beginning with uridine, leading to the formation of N6-(dimethylallyl)adenosine (i(6)A). This is tRNA dimethylallyltransferase from Methylocella silvestris (strain DSM 15510 / CIP 108128 / LMG 27833 / NCIMB 13906 / BL2).